A 4885-amino-acid polypeptide reads, in one-letter code: Centrosome-associated protein CEP530 (4885 aa).

Residues 1437-1528 (VAEYEAETRG…GREKDQLRSE (92 aa)) are a coiled coil.

Its subcellular location is the cytoplasm. It localises to the cytoskeleton. It is found in the microtubule organizing center. The protein resides in the centrosome. Its function is as follows. Required for proper nuclei segregation during the cell division. Plays a role in coordination of karyokinesis and cytokinesis during the tachyzoite cell cycle. The protein is Centrosome-associated protein CEP530 of Toxoplasma gondii (strain ATCC 50611 / Me49).